We begin with the raw amino-acid sequence, 307 residues long: UDP-3-O-acyl-N-acetylglucosamine deacetylase (307 aa).

The Zn(2+) site is built by His80, His239, and Asp243. The Proton donor role is filled by His266.

Belongs to the LpxC family. It depends on Zn(2+) as a cofactor.

It catalyses the reaction a UDP-3-O-[(3R)-3-hydroxyacyl]-N-acetyl-alpha-D-glucosamine + H2O = a UDP-3-O-[(3R)-3-hydroxyacyl]-alpha-D-glucosamine + acetate. The protein operates within glycolipid biosynthesis; lipid IV(A) biosynthesis; lipid IV(A) from (3R)-3-hydroxytetradecanoyl-[acyl-carrier-protein] and UDP-N-acetyl-alpha-D-glucosamine: step 2/6. Its function is as follows. Catalyzes the hydrolysis of UDP-3-O-myristoyl-N-acetylglucosamine to form UDP-3-O-myristoylglucosamine and acetate, the committed step in lipid A biosynthesis. The polypeptide is UDP-3-O-acyl-N-acetylglucosamine deacetylase (Neisseria meningitidis serogroup C (strain 053442)).